Here is a 461-residue protein sequence, read N- to C-terminus: MGPTRWRKSTHVVVGAAVLAFVAVVVAAAALVTTGGHRAGVRAPAPPPRPPTVKAGVVPVADTAATPSAAGVTAALAVVAADPDLGKLAGRITDALTGQELWQRLDDVPLVPASTNKILTAAAALLTLDRQARISTRVVAGGQNPQGPVVLVGAGDPTLSAAPPGQDTWYHGAARIGDLVEQIRRSGVTPTAVQVDASAFSGPTMAPGWDPADIDNGDIAPIEAAMIDAGRIQPTTVNSRRSRTPALDAGRELAKALGLDPAAVTIASAPAGARQLAVVQSAPLIQRLSQMMNASDNVMAECIGREVAVAINRPQSFSGAVDAVTSRLNTAHIDTAGAALVDSSGLSLDNRLTARTLDATMQAAAGPDQPALRPLLDLLPIAGGSGTLGERFLDAATDQGPAGWLRAKTGSLTAINSLVGVLTDRSGRVLTFAFISNEAGPNGRNAMDALATKLWFCGCTT.

The N-terminal stretch at Met-1–Ala-28 is a signal peptide. The Acyl-ester intermediate role is filled by Ser-114. Lys-117 functions as the Proton acceptor in the catalytic mechanism. The active site involves Ser-295.

This sequence belongs to the peptidase S13 family.

Its function is as follows. Carboxypeptidase that cleaves terminal D-alanine from peptidoglycan in the mycobacterial cell wall. May cleave L-Lys-D-Ala and/or D-Ala-D-Ala peptide bonds. Exerts important effects on mycobacterial cell morphology and cell division. This is Carboxypeptidase Rv3627c from Mycobacterium tuberculosis (strain ATCC 25618 / H37Rv).